Here is a 1361-residue protein sequence, read N- to C-terminus: Protein transport protein SEC16B homolog (1361 aa).

Residue S46 is modified to Phosphoserine. Disordered stretches follow at residues 82-109 (NEGA…HSDA), 487-513 (VDDA…GRPP), 984-1013 (PVGG…QEAT), 1025-1062 (SSLM…GRTP), 1163-1204 (ENKS…ARGR), 1216-1235 (NPPG…VQTA), and 1306-1361 (SVNG…EVEL). Residues 491–503 (PQSFQSSQLFSPS) are compositionally biased toward low complexity. Residues 996–1013 (TKGNLQGNEYQHQQQEAT) show a composition bias toward polar residues. Polar residues-rich tracts occupy residues 1169-1200 (IPSN…NQFS), 1222-1234 (NSHT…SVQT), and 1308-1325 (NGDN…SWSG). Over residues 1326-1354 (NFNTSFTPPTSPSTFKPVLLNSSSSSLGE) the composition is skewed to low complexity.

The protein belongs to the SEC16 family.

The protein localises to the golgi apparatus. It localises to the endoplasmic reticulum. Required for protein transport from the endoplasmic reticulum to the Golgi apparatus. This is Protein transport protein SEC16B homolog from Arabidopsis thaliana (Mouse-ear cress).